The primary structure comprises 354 residues: uncharacterized protein (354 aa).

It belongs to the asfivirus B354L family.

This is an uncharacterized protein from Ornithodoros (relapsing fever ticks).